A 144-amino-acid chain; its full sequence is Phospholipase A2, membrane associated (144 aa).

The first 20 residues, 1–20 (MKTLLLLAVIMIFGLLQAHG), serve as a signal peptide directing secretion. 7 cysteine pairs are disulfide-bonded: Cys46–Cys137, Cys48–Cys64, Cys63–Cys117, Cys69–Cys144, Cys70–Cys110, Cys79–Cys103, and Cys97–Cys108. His47, Gly49, and Gly51 together coordinate Ca(2+). His67 is an active-site residue. Asp68 contributes to the Ca(2+) binding site. Asp111 is an active-site residue.

Belongs to the phospholipase A2 family. Ca(2+) serves as cofactor. As to expression, expressed in various tissues including heart, kidney, liver, lung, pancreas, placenta, skeletal muscle, prostate, ovary, colon and small intestine. Not detected in lymphoid organs and brain. Expressed in platelets (at protein level).

It localises to the secreted. The protein resides in the cell membrane. Its subcellular location is the mitochondrion outer membrane. It carries out the reaction a 1,2-diacyl-sn-glycero-3-phosphoethanolamine + H2O = a 1-acyl-sn-glycero-3-phosphoethanolamine + a fatty acid + H(+). The catalysed reaction is 1-hexadecanoyl-2-(9Z-octadecenoyl)-sn-glycero-3-phosphoethanolamine + H2O = 1-hexadecanoyl-sn-glycero-3-phosphoethanolamine + (9Z)-octadecenoate + H(+). The enzyme catalyses 1-hexadecanoyl-2-(9Z,12Z-octadecadienoyl)-sn-glycero-3-phosphoethanolamine + H2O = 1-hexadecanoyl-sn-glycero-3-phosphoethanolamine + (9Z,12Z)-octadecadienoate + H(+). It catalyses the reaction 1-hexadecanoyl-2-(5Z,8Z,11Z,14Z-eicosatetraenoyl)-sn-glycero-3-phosphoethanolamine + H2O = 1-hexadecanoyl-sn-glycero-3-phosphoethanolamine + (5Z,8Z,11Z,14Z)-eicosatetraenoate + H(+). It carries out the reaction N-hexadecanoyl-1,2-di-(9Z-octadecenoyl)-sn-glycero-3-phosphoethanolamine + H2O = N-hexadecanoyl-1-(9Z-octadecenoyl)-sn-glycero-3-phosphoethanolamine + (9Z)-octadecenoate + H(+). The catalysed reaction is 1,2-dihexadecanoyl-sn-glycero-3-phospho-(1'-sn-glycerol) + H2O = 1-hexadecanoyl-sn-glycero-3-phospho-(1'-sn-glycerol) + hexadecanoate + H(+). The enzyme catalyses 1-hexadecanoyl-2-(9Z-octadecenoyl)-sn-glycero-3-phosphoglycerol + H2O = 1-hexadecanoyl-sn-glycero-3-phosphoglycerol + (9Z)-octadecenoate + H(+). It catalyses the reaction 1-hexadecanoyl-2-(9Z-octadecenoyl)-sn-glycero-3-phospho-(1'-sn-glycerol) + H2O = 1-hexadecanoyl-sn-glycero-3-phospho-(1'-sn-glycerol) + (9Z)-octadecenoate + H(+). It carries out the reaction a 1,2-diacyl-sn-glycero-3-phosphocholine + H2O = a 1-acyl-sn-glycero-3-phosphocholine + a fatty acid + H(+). The catalysed reaction is 1,2-dihexadecanoyl-sn-glycero-3-phosphocholine + H2O = 1-hexadecanoyl-sn-glycero-3-phosphocholine + hexadecanoate + H(+). The enzyme catalyses 1-hexadecanoyl-2-(9Z-octadecenoyl)-sn-glycero-3-phosphocholine + H2O = 1-hexadecanoyl-sn-glycero-3-phosphocholine + (9Z)-octadecenoate + H(+). It catalyses the reaction 1-hexadecanoyl-2-(9Z,12Z-octadecadienoyl)-sn-glycero-3-phosphocholine + H2O = (9Z,12Z)-octadecadienoate + 1-hexadecanoyl-sn-glycero-3-phosphocholine + H(+). It carries out the reaction 1-hexadecanoyl-2-(4Z,7Z,10Z,13Z,16Z,19Z-docosahexaenoyl)-sn-glycero-3-phosphocholine + H2O = (4Z,7Z,10Z,13Z,16Z,19Z)-docosahexaenoate + 1-hexadecanoyl-sn-glycero-3-phosphocholine + H(+). Functionally, secretory calcium-dependent phospholipase A2 that primarily targets extracellular phospholipids with implications in host antimicrobial defense, inflammatory response and tissue regeneration. Hydrolyzes the ester bond of the fatty acyl group attached at sn-2 position of phospholipids (phospholipase A2 activity) with preference for phosphatidylethanolamines and phosphatidylglycerols over phosphatidylcholines. Contributes to lipid remodeling of cellular membranes and generation of lipid mediators involved in pathogen clearance. Displays bactericidal activity against Gram-positive bacteria by directly hydrolyzing phospholipids of the bacterial membrane. Upon sterile inflammation, targets membrane phospholipids of extracellular mitochondria released from activated platelets, generating free unsaturated fatty acids such as arachidonate that is used by neighboring leukocytes to synthesize inflammatory eicosanoids such as leukotrienes. Simultaneously, by compromising mitochondrial membrane integrity, promotes the release in circulation of potent damage-associated molecular pattern molecules that activate the innate immune response. Plays a stem cell regulator role in the intestinal crypt. Within intracellular compartment mediates Paneth cell differentiation and its stem cell supporting functions by inhibiting Wnt signaling pathway in intestinal stem cell (ICS). Secreted in the intestinal lumen upon inflammation, acts in an autocrine way and promotes prostaglandin E2 synthesis that stimulates Wnt signaling pathway in ICS cells and tissue regeneration. May play a role in the biosynthesis of N-acyl ethanolamines that regulate energy metabolism and inflammation. Hydrolyzes N-acyl phosphatidylethanolamines to N-acyl lysophosphatidylethanolamines, which are further cleaved by a lysophospholipase D to release N-acyl ethanolamines. Independent of its catalytic activity, acts as a ligand for integrins. Binds to and activates integrins ITGAV:ITGB3, ITGA4:ITGB1 and ITGA5:ITGB1. Binds to a site (site 2) which is distinct from the classical ligand-binding site (site 1) and induces integrin conformational changes and enhanced ligand binding to site 1. Induces cell proliferation in an integrin-dependent manner. This chain is Phospholipase A2, membrane associated (PLA2G2A), found in Homo sapiens (Human).